The sequence spans 1974 residues: Protein Ycf2 (1974 aa).

Residues 219-246 (SQLKGSSYQSRDHLDSISNEDSEYHNQR) are disordered. 1308–1315 (GSIGTGRS) contributes to the ATP binding site.

It belongs to the Ycf2 family.

It is found in the plastid. The protein localises to the chloroplast stroma. Its function is as follows. Probable ATPase of unknown function. Its presence in a non-photosynthetic plant (Epifagus virginiana) and experiments in tobacco indicate that it has an essential function which is probably not related to photosynthesis. This chain is Protein Ycf2, found in Jasminum nudiflorum (Winter jasmine).